A 203-amino-acid polypeptide reads, in one-letter code: Ras-related protein Rab-7a (203 aa).

GTP contacts are provided by residues 15-22 (GDSGVGKT), 34-40 (SNQYKAT), 63-67 (DTAGQ), 125-128 (NKID), and 157-158 (AK). The Effector region signature appears at 37 to 45 (YKATIGADF). S-geranylgeranyl cysteine attachment occurs at residues cysteine 202 and cysteine 203.

It belongs to the small GTPase superfamily. Rab family.

It is found in the late endosome membrane. The protein localises to the lysosome membrane. It localises to the cytoplasmic vesicle. Its subcellular location is the autophagosome membrane. The protein resides in the lipid droplet. The catalysed reaction is GTP + H2O = GDP + phosphate + H(+). Small GTPase which cycles between active GTP-bound and inactive GDP-bound states. In its active state, binds to a variety of effector proteins playing a key role in the regulation of endo-lysosomal trafficking. Governs early-to-late endosomal maturation, microtubule minus-end as well as plus-end directed endosomal migration and positioning, and endosome-lysosome transport through different protein-protein interaction cascades. Involved in lipophagy, a cytosolic lipase-independent autophagic pathway. In Dictyostelium discoideum (Social amoeba), this protein is Ras-related protein Rab-7a (rab7A).